The sequence spans 346 residues: Histidinol-phosphate aminotransferase (346 aa).

N6-(pyridoxal phosphate)lysine is present on K206.

It belongs to the class-II pyridoxal-phosphate-dependent aminotransferase family. Histidinol-phosphate aminotransferase subfamily. In terms of assembly, homodimer. It depends on pyridoxal 5'-phosphate as a cofactor.

The catalysed reaction is L-histidinol phosphate + 2-oxoglutarate = 3-(imidazol-4-yl)-2-oxopropyl phosphate + L-glutamate. The protein operates within amino-acid biosynthesis; L-histidine biosynthesis; L-histidine from 5-phospho-alpha-D-ribose 1-diphosphate: step 7/9. The sequence is that of Histidinol-phosphate aminotransferase from Bacteroides thetaiotaomicron (strain ATCC 29148 / DSM 2079 / JCM 5827 / CCUG 10774 / NCTC 10582 / VPI-5482 / E50).